A 259-amino-acid polypeptide reads, in one-letter code: MAVTGPWVGSSAVVNTGQNWMVGAAQRLRMGAPFWMSNMIGRSVEVIHTLGADHNFNGQWFRDRCFEAGSAPIVFNITGDLVSYSRDVPLFFMYGDTPNEYVQLNIHGVTMYGRGGNGWAACAIGASDGGVCIQNDIGGRLRINNGGAIAGGGGGGGGYSQANNWAGKYVCGGGGGRPFGLGGNNGARWPGGNASLTSPGAGGNTGTRYYAGGGGEVGQPGQYANPGASYSTPPTSPGAAVAGSAPTWQNVGAIYGPRV.

Short sequence motifs (GRM) lie at residues 113-122 (GRGGNGWAAC), 124-131 (IGASDGGV), 151-161 (GGGGGGGGYSQ), 164-177 (NWAG…GGGR), 180-186 (GLGGNNG), 189-195 (WPGGNAS), 197-204 (TSPGAGGN), 210-216 (YAGGGGE), 219-224 (QPGQYA), and 227-239 (GASY…SPGA). The disordered stretch occupies residues 213 to 243 (GGGEVGQPGQYANPGASYSTPPTSPGAAVAG).

It belongs to the receptor-recognizing protein gp38 family.

The protein resides in the virion. Receptor binding protein (RBP) that is at the tip of the long tail fibers and serves as the phage recognition site for the attachment host receptor OmpC. The chain is Receptor-recognizing protein gp38 (38) from Escherichia phage AR1 (Bacteriophage AR1).